Reading from the N-terminus, the 123-residue chain is uncharacterized protein (123 aa).

This is an uncharacterized protein from Human cytomegalovirus (strain AD169) (HHV-5).